The following is a 386-amino-acid chain: Zinc finger protein 385A (386 aa).

Residues 74-98 form a Matrin-type 1 zinc finger; sequence ISCNICQIRFNSQSQAEAHYKGNRH. Positions 90 to 193 are disordered; it reads EAHYKGNRHA…ASLPGGSKEE (104 aa). The segment covering 103–121 has biased composition (basic and acidic residues); sequence KGIEAAKTRGREPGVREPG. The tract at residues 145-351 is necessary for binding to ITPR1, CEBPA and p53/TP53 mRNAs; sequence NGLGPAPGSP…AGSPLSLRPA (207 aa). The residue at position 185 (serine 185) is a Phosphoserine. The Matrin-type 2 zinc finger occupies 201–225; the sequence is LYCALCKVAVNSLSQLEAHNKGTKH. Position 248 is a phosphothreonine (threonine 248). The Matrin-type 3 zinc finger occupies 261 to 285; that stretch reads FHCEICNVKVNSEVQLKQHISSRRH. Residues 279-309 are disordered; sequence HISSRRHRDGVAGKPNPLLSRHKKSRGAGEL.

Interacts with ELAVL1; the interaction is indirect, mRNA-dependent and may regulate p53/TP53 expression. Interacts with p53/TP53; the interaction is direct and enhances p53/TP53 transactivation functions on cell-cycle arrest target genes, resulting in growth arrest. Ubiquitinated upon prolonged exposure to genotoxic stress, which leads to proteasomal degradation of ZNF385A and releases p53/TP53 from cell-cycle arrest target gene promoters. Expressed predominantly in the retina.

Its subcellular location is the cytoplasm. The protein resides in the nucleus. It is found in the nucleolus. The protein localises to the cell projection. It localises to the dendrite. Functionally, RNA-binding protein that affects the localization and the translation of a subset of mRNA. May play a role in adipogenesis through binding to the 3'-UTR of CEBPA mRNA and regulation of its translation. Targets ITPR1 mRNA to dendrites in Purkinje cells, and may regulate its activity-dependent translation. With ELAVL1, binds the 3'-UTR of p53/TP53 mRNAs to control their nuclear export induced by CDKN2A. Hence, may regulate p53/TP53 expression and mediate in part the CDKN2A anti-proliferative activity. May also bind CCNB1 mRNA. Alternatively, may also regulate p53/TP53 activity through direct protein-protein interaction. Interacts with p53/TP53 and promotes cell-cycle arrest over apoptosis enhancing preferentially the DNA binding and transactivation of p53/TP53 on cell-cycle arrest target genes over proapoptotic target genes. May also regulate the ubiquitination and stability of CDKN1A promoting DNA damage-induced cell cycle arrest. Also plays a role in megakaryocytes differentiation. The protein is Zinc finger protein 385A (ZNF385A) of Homo sapiens (Human).